We begin with the raw amino-acid sequence, 356 residues long: Leucine carboxyl methyltransferase 1 (356 aa).

S-adenosyl-L-methionine is bound by residues R78, G101, D127, 183–184 (DL), and E218.

The protein belongs to the methyltransferase superfamily. LCMT family.

The enzyme catalyses [phosphatase 2A protein]-C-terminal L-leucine + S-adenosyl-L-methionine = [phosphatase 2A protein]-C-terminal L-leucine methyl ester + S-adenosyl-L-homocysteine. Its function is as follows. Methylates the carboxyl group of the C-terminal leucine residue of protein phosphatase 2A catalytic subunits to form alpha-leucine ester residues. The sequence is that of Leucine carboxyl methyltransferase 1 (PPM1) from Cryptococcus neoformans var. neoformans serotype D (strain JEC21 / ATCC MYA-565) (Filobasidiella neoformans).